The primary structure comprises 1175 residues: Tyrosine-protein phosphatase non-receptor type 21 (1175 aa).

Positions 23 to 308 (LVARIQLLNN…ARHKFYRLNQ (286 aa)) constitute an FERM domain. Residues 395–421 (YSAHSTNSLNTPQPYLQPSPMSSNPSI) show a composition bias toward polar residues. Residues 395–445 (YSAHSTNSLNTPQPYLQPSPMSSNPSIPGSDVMRPDYIPSHRHSALIPPSY) form a disordered region. Phosphoserine occurs at positions 577, 589, 590, 637, 673, 710, 711, 798, 800, and 805. The interval 663–702 (DVAPRTFSAGSQSSVFSDKVKQEGTEEQGSGGYSHKKSLS) is disordered. One can recognise a Tyrosine-protein phosphatase domain in the interval 897 to 1168 (VFTEYERILK…TFVYRVLIQF (272 aa)). Residues E1068, 1109–1115 (CSAGVGR), and Q1153 each bind substrate. C1109 acts as the Phosphocysteine intermediate in catalysis.

This sequence belongs to the protein-tyrosine phosphatase family. Non-receptor class subfamily. Particularly abundantly in adrenal glands.

The protein localises to the cytoplasm. It is found in the cytoskeleton. It carries out the reaction O-phospho-L-tyrosyl-[protein] + H2O = L-tyrosyl-[protein] + phosphate. The polypeptide is Tyrosine-protein phosphatase non-receptor type 21 (Ptpn21) (Rattus norvegicus (Rat)).